A 255-amino-acid chain; its full sequence is Carboxy-S-adenosyl-L-methionine synthase (255 aa).

S-adenosyl-L-methionine contacts are provided by residues tyrosine 45, 70-72 (GCS), 124-125 (DI), and asparagine 139.

This sequence belongs to the class I-like SAM-binding methyltransferase superfamily. Cx-SAM synthase family. In terms of assembly, homodimer.

The catalysed reaction is prephenate + S-adenosyl-L-methionine = carboxy-S-adenosyl-L-methionine + 3-phenylpyruvate + H2O. Functionally, catalyzes the conversion of S-adenosyl-L-methionine (SAM) to carboxy-S-adenosyl-L-methionine (Cx-SAM). This Hamiltonella defensa subsp. Acyrthosiphon pisum (strain 5AT) protein is Carboxy-S-adenosyl-L-methionine synthase.